A 351-amino-acid polypeptide reads, in one-letter code: Histidine protein kinase SaeS (351 aa).

2 consecutive transmembrane segments (helical) span residues 9–29 and 40–60; these read IIIG…IAYI and TLTL…SIFI. The HAMP domain occupies 61-114; it reads NPLIQKIKQFNIKTKQFANGNYASNDKTFNSPKEIYELNQSFNKMASEITQQMN. Residues 129–348 form the Histidine kinase domain; that stretch reads NLAHDLKTPL…TMTVTLHKLD (220 aa). Phosphohistidine; by autocatalysis is present on H132.

Autophosphorylated.

It localises to the cell membrane. The catalysed reaction is ATP + protein L-histidine = ADP + protein N-phospho-L-histidine.. In terms of biological role, member of the two-component regulatory system SaeR/SaeS involved in the regulation of staphylococcal virulence factors in a strain-dependent fashion. Probably functions as a membrane-associated protein kinase that upon sensing the appropriate signal, autophosphorylates and in turn activates the cytosolic response regulator SaeR. The chain is Histidine protein kinase SaeS (saeS) from Staphylococcus aureus (strain MRSA252).